The primary structure comprises 91 residues: UPF0358 protein SAB0977 (91 aa).

This sequence belongs to the UPF0358 family.

This Staphylococcus aureus (strain bovine RF122 / ET3-1) protein is UPF0358 protein SAB0977.